We begin with the raw amino-acid sequence, 486 residues long: uncharacterized protein (486 aa).

24 to 35 is a binding site for NAD(+); it reads IVHLGFGAFHRA.

This sequence belongs to the mannitol dehydrogenase family. UxuB subfamily.

This is an uncharacterized protein from Escherichia coli (strain K12).